A 222-amino-acid chain; its full sequence is MAAPVRQTRSLLGWVTTLGPGSRGYRAPPPPRRSREPWWPDPDDPLTPRWQLGPRYAAKQFARHGAASGVDPGSLWPSREQLLELEAEEREWYPSLAVMQESLRVQQLAEEQKRQAREQLIEECMAKMPQMIENWRRQQQARREKAQADKERRARLQAEAQERLGYHVDPRSARFQELLQDLEKQHRKRLKEEKQRKKKEARAAAMAAAAAQDPADSETPDS.

Disordered regions lie at residues 1 to 51, 136 to 170, and 182 to 222; these read MAAP…PRWQ, RRQQ…HVDP, and LEKQ…TPDS. The segment covering 141–170 has biased composition (basic and acidic residues); sequence ARREKAQADKERRARLQAEAQERLGYHVDP. A coiled-coil region spans residues 144-213; it reads EKAQADKERR…AAMAAAAAQD (70 aa). The short motif at 184–200 is the Nuclear localization signal element; that stretch reads KQHRKRLKEEKQRKKKE. The span at 203-212 shows a compositional bias: low complexity; it reads AAAMAAAAAQ.

It belongs to the mitochondrion-specific ribosomal protein mL64 family. In terms of assembly, component of the mitochondrial ribosome large subunit (39S) which comprises a 16S rRNA and about 50 distinct proteins. Interacts with GADD45A, GADD45B and GADD45G. Interacts with NR4A1 via the NR4A1 AB domain. Interacts with ATAD3A and ATAD3B.

The protein localises to the mitochondrion. The protein resides in the nucleus. In terms of biological role, acts as a negative regulator of G1 to S cell cycle phase progression by inhibiting cyclin-dependent kinases. Inhibitory effects are additive with GADD45 proteins but also occur in the absence of GADD45 proteins. Acts as a repressor of the orphan nuclear receptor NR4A1 by inhibiting AB domain-mediated transcriptional activity. May be involved in the hormone-mediated regulation of NR4A1 transcriptional activity. May play a role in mitochondrial protein synthesis. The protein is Large ribosomal subunit protein mL64 (GADD45GIP1) of Bos taurus (Bovine).